We begin with the raw amino-acid sequence, 476 residues long: Nyctalopin (476 aa).

The first 18 residues, 1–18, serve as a signal peptide directing secretion; sequence MLVLLLHAVVLGLPSAWA. 11 LRR repeats span residues 60 to 84, 85 to 108, 110 to 133, 134 to 157, 159 to 181, 182 to 204, 205 to 228, 229 to 252, 254 to 276, 277 to 300, and 302 to 324; these read VSID…PSLR, RLSL…PRLA, LRLA…SRLR, RLDL…PALR, LAAF…NLTH, AHLE…RRLR, SLSL…GVLE, HLLL…RRLR, LNLG…AELE, LLYL…SGLL, and LHLN…FFLG. N-linked (GlcNAc...) asparagine glycosylation occurs at Asn92. An N-linked (GlcNAc...) asparagine glycan is attached at Asn178. Residue Asn295 is glycosylated (N-linked (GlcNAc...) asparagine). One can recognise an LRRCT domain in the interval 336 to 387; that stretch reads DCRLEWLRDWMEGSGRVTDVPCASPGSVAGLDLSQVTFGRSSDGLCVDPEEL. 3 N-linked (GlcNAc...) asparagine glycosylation sites follow: Asn388, Asn427, and Asn434.

Belongs to the small leucine-rich proteoglycan (SLRP) family. SLRP class IV subfamily. In terms of tissue distribution, expressed in kidney and retina. Also at low levels in brain, testis and muscle. Within the retina, expressed in the inner segment of photoreceptors, outer and inner nuclear layers and the ganglion cell layer.

The protein localises to the secreted. It localises to the extracellular space. It is found in the extracellular matrix. This is Nyctalopin (NYX) from Homo sapiens (Human).